We begin with the raw amino-acid sequence, 359 residues long: Phospho-N-acetylmuramoyl-pentapeptide-transferase (359 aa).

The next 10 membrane-spanning stretches (helical) occupy residues 3 to 23 (QILIAVAIALAVAILLTPVLI), 55 to 75 (VAIIAGIWVSYFGTHLVGVLM), 84 to 104 (GLLVLGLATSLGVVGFLDDLI), 117 to 137 (TAKTVGILVAAVLFGVLALQF), 156 to 176 (IATVTLAPAVFVLFCVVVVSA), 190 to 210 (LAAGAMAMVCAAYVLITFWQF), 231 to 251 (LAIIAAATAGACIGFLWWNAA), 255 to 275 (IFMGDTGSLALGGIIAGLSVT), 283 to 303 (VVLGALFVAEVTSVVVQILAF), and 330 to 350 (VIIRFWLLTAIACGLGVALFY).

The protein belongs to the glycosyltransferase 4 family. MraY subfamily. Requires Mg(2+) as cofactor.

The protein localises to the cell membrane. It carries out the reaction UDP-N-acetyl-alpha-D-muramoyl-L-alanyl-gamma-D-glutamyl-meso-2,6-diaminopimeloyl-D-alanyl-D-alanine + di-trans,octa-cis-undecaprenyl phosphate = di-trans,octa-cis-undecaprenyl diphospho-N-acetyl-alpha-D-muramoyl-L-alanyl-D-glutamyl-meso-2,6-diaminopimeloyl-D-alanyl-D-alanine + UMP. The protein operates within cell wall biogenesis; peptidoglycan biosynthesis. In terms of biological role, catalyzes the initial step of the lipid cycle reactions in the biosynthesis of the cell wall peptidoglycan: transfers peptidoglycan precursor phospho-MurNAc-pentapeptide from UDP-MurNAc-pentapeptide onto the lipid carrier undecaprenyl phosphate, yielding undecaprenyl-pyrophosphoryl-MurNAc-pentapeptide, known as lipid I. In Mycolicibacterium gilvum (strain PYR-GCK) (Mycobacterium gilvum (strain PYR-GCK)), this protein is Phospho-N-acetylmuramoyl-pentapeptide-transferase.